We begin with the raw amino-acid sequence, 376 residues long: Queuine tRNA-ribosyltransferase (376 aa).

The Proton acceptor role is filled by aspartate 90. Substrate contacts are provided by residues aspartate 90–phenylalanine 94, aspartate 144, glutamine 193, and glycine 220. Positions glycine 251–aspartate 257 are RNA binding. The active-site Nucleophile is the aspartate 270. Residues threonine 275 to arginine 279 are RNA binding; important for wobble base 34 recognition. Residues cysteine 308, cysteine 310, cysteine 313, and histidine 339 each coordinate Zn(2+).

This sequence belongs to the queuine tRNA-ribosyltransferase family. In terms of assembly, homodimer. Within each dimer, one monomer is responsible for RNA recognition and catalysis, while the other monomer binds to the replacement base PreQ1. Zn(2+) is required as a cofactor.

The enzyme catalyses 7-aminomethyl-7-carbaguanine + guanosine(34) in tRNA = 7-aminomethyl-7-carbaguanosine(34) in tRNA + guanine. The protein operates within tRNA modification; tRNA-queuosine biosynthesis. Its function is as follows. Catalyzes the base-exchange of a guanine (G) residue with the queuine precursor 7-aminomethyl-7-deazaguanine (PreQ1) at position 34 (anticodon wobble position) in tRNAs with GU(N) anticodons (tRNA-Asp, -Asn, -His and -Tyr). Catalysis occurs through a double-displacement mechanism. The nucleophile active site attacks the C1' of nucleotide 34 to detach the guanine base from the RNA, forming a covalent enzyme-RNA intermediate. The proton acceptor active site deprotonates the incoming PreQ1, allowing a nucleophilic attack on the C1' of the ribose to form the product. After dissociation, two additional enzymatic reactions on the tRNA convert PreQ1 to queuine (Q), resulting in the hypermodified nucleoside queuosine (7-(((4,5-cis-dihydroxy-2-cyclopenten-1-yl)amino)methyl)-7-deazaguanosine). In Campylobacter concisus (strain 13826), this protein is Queuine tRNA-ribosyltransferase.